The following is a 568-amino-acid chain: Zinc finger protein 76 (568 aa).

A Glycyl lysine isopeptide (Lys-Gly) (interchain with G-Cter in SUMO2) cross-link involves residue Lys24. Tandem repeats lie at residues 34-45 (IQLEDGTTAYIH), 62-73 (VQLEDGSMAYIH), and 88-99 (VQLEDGSTAYIH). A 3 X 12 AA approximate repeats region spans residues 34 to 99 (IQLEDGTTAY…LEDGSTAYIH (66 aa)). 7 consecutive C2H2-type zinc fingers follow at residues 165-189 (FRCGYKGCGRLYTTAHHLKVHERAH), 195-219 (YRCDFPSCGKAFATGYGLKSHVRTH), 225-249 (YKCPEELCSKAFKTSGDLQKHVRTH), 255-279 (FRCPFEGCGRSFTTSNIRKVHVRTH), 285-309 (YTCPEPHCGRGFTSATNYKNHVRIH), 315-339 (YVCTVPGCGKRFTEYSSLYKHHVVH), and 345-368 (YTCSSCGKTYRQTSTLAMHKRSAH). The tract at residues 365–402 (RSAHGELEATEESEQALYEQQQLEAASAAEESPPPKPT) is disordered. Over residues 379-395 (QALYEQQQLEAASAAEE) the composition is skewed to low complexity.

This sequence belongs to the krueppel C2H2-type zinc-finger protein family.

Its subcellular location is the nucleus. Functionally, may be involved in transcriptional regulation. In Mus musculus (Mouse), this protein is Zinc finger protein 76 (Znf76).